The chain runs to 295 residues: Pyridoxal 5'-phosphate synthase subunit PdxS (295 aa).

D-ribose 5-phosphate is bound at residue D25. K82 serves as the catalytic Schiff-base intermediate with D-ribose 5-phosphate. Residue G154 coordinates D-ribose 5-phosphate. D-glyceraldehyde 3-phosphate is bound at residue R166. Residues G215 and 236 to 237 contribute to the D-ribose 5-phosphate site; that span reads GS.

Belongs to the PdxS/SNZ family. In the presence of PdxT, forms a dodecamer of heterodimers.

The enzyme catalyses aldehydo-D-ribose 5-phosphate + D-glyceraldehyde 3-phosphate + L-glutamine = pyridoxal 5'-phosphate + L-glutamate + phosphate + 3 H2O + H(+). The protein operates within cofactor biosynthesis; pyridoxal 5'-phosphate biosynthesis. Its function is as follows. Catalyzes the formation of pyridoxal 5'-phosphate from ribose 5-phosphate (RBP), glyceraldehyde 3-phosphate (G3P) and ammonia. The ammonia is provided by the PdxT subunit. Can also use ribulose 5-phosphate and dihydroxyacetone phosphate as substrates, resulting from enzyme-catalyzed isomerization of RBP and G3P, respectively. The polypeptide is Pyridoxal 5'-phosphate synthase subunit PdxS (Shouchella clausii (strain KSM-K16) (Alkalihalobacillus clausii)).